The sequence spans 316 residues: Lipooligosaccharide heptosyltransferase 2 (316 aa).

This sequence belongs to the glycosyltransferase 9 family.

It carries out the reaction an L-alpha-D-Hep-(1-&gt;5)-[alpha-Kdo-(2-&gt;4)]-alpha-Kdo-(2-&gt;6)-lipid A + ADP-L-glycero-beta-D-manno-heptose = an L-alpha-D-Hep-(1-&gt;3)-L-alpha-D-Hep-(1-&gt;5)-[alpha-Kdo-(2-&gt;4)]-alpha-Kdo-(2-&gt;6)-lipid A + ADP + H(+). It participates in bacterial outer membrane biogenesis; LOS core biosynthesis. Functionally, glycosyltransferase involved in the biosynthesis of the core oligosaccharide region of lipooligosaccharide (LOS). Catalyzes the addition of the second heptose unit to the heptosyl-Kdo2-lipid A module. The protein is Lipooligosaccharide heptosyltransferase 2 of Campylobacter jejuni subsp. jejuni serotype O:6 (strain 81116 / NCTC 11828).